Consider the following 188-residue polypeptide: Pyridoxal 5'-phosphate synthase subunit PdxT (188 aa).

47 to 49 (GES) is a binding site for L-glutamine. C79 (nucleophile) is an active-site residue. L-glutamine contacts are provided by residues R106 and 134–135 (IR). Active-site charge relay system residues include H169 and E171.

It belongs to the glutaminase PdxT/SNO family. In the presence of PdxS, forms a dodecamer of heterodimers. Only shows activity in the heterodimer.

It carries out the reaction aldehydo-D-ribose 5-phosphate + D-glyceraldehyde 3-phosphate + L-glutamine = pyridoxal 5'-phosphate + L-glutamate + phosphate + 3 H2O + H(+). It catalyses the reaction L-glutamine + H2O = L-glutamate + NH4(+). The protein operates within cofactor biosynthesis; pyridoxal 5'-phosphate biosynthesis. In terms of biological role, catalyzes the hydrolysis of glutamine to glutamate and ammonia as part of the biosynthesis of pyridoxal 5'-phosphate. The resulting ammonia molecule is channeled to the active site of PdxS. This chain is Pyridoxal 5'-phosphate synthase subunit PdxT, found in Caldicellulosiruptor bescii (strain ATCC BAA-1888 / DSM 6725 / KCTC 15123 / Z-1320) (Anaerocellum thermophilum).